Here is a 312-residue protein sequence, read N- to C-terminus: Pectin lyase (312 aa).

The active site involves Arg201. The tract at residues 254 to 274 (GSGTFTDTNSVPPITNQKSPK) is disordered. Residues 256-274 (GTFTDTNSVPPITNQKSPK) are compositionally biased toward polar residues.

The protein belongs to the polysaccharide lyase 1 family.

The enzyme catalyses Eliminative cleavage of (1-&gt;4)-alpha-D-galacturonan methyl ester to give oligosaccharides with 4-deoxy-6-O-methyl-alpha-D-galact-4-enuronosyl groups at their non-reducing ends.. This Pseudomonas marginalis (Pseudomonas panacis) protein is Pectin lyase (pnl).